The chain runs to 529 residues: Mannuronan C5-epimerase (529 aa).

A signal peptide spans 1–30 (MGACAMNPQALKGSAMLAAAMLLASGAAMA). PbH1 repeat units follow at residues 229–256 (GTET…SISQ), 291–313 (TTGF…DPHD), 315–338 (SHGL…IISR), 340–362 (VNDS…VLDR), 364–386 (SVNN…TLYE), and 387–409 (SGDN…RVRN). His-312 acts as the Proton acceptor in catalysis.

The protein belongs to the D-mannuronate C5-epimerase family.

The protein resides in the periplasm. The catalysed reaction is [(1-&gt;4)-beta-D-mannuronosyl](n) = [alginate](n). It functions in the pathway glycan biosynthesis; alginate biosynthesis. Catalyzes the epimerization of beta-D-mannuronate to alpha-L-guluronate during the synthesis of the linear polysaccharide alginate. In addition, is part of a periplasmic protein complex that protects alginate from degradation by AlgL by channeling the newly formed alginate polymer through a scaffold that transfers the alginate polymer through the periplasmic space to the outer membrane secretin AlgE. The polypeptide is Mannuronan C5-epimerase (Pseudomonas fluorescens).